Consider the following 323-residue polypeptide: L-lactate dehydrogenase (323 aa).

Residues Val-18, Asp-39, Tyr-69, and 83–84 contribute to the NAD(+) site; that span reads GA. Positions 86 and 92 each coordinate substrate. Residues Ser-105, 122–124, and Ser-147 each bind NAD(+); that span reads VAN. 124 to 127 provides a ligand contact to substrate; sequence NPVD. Residue 152-155 coordinates substrate; the sequence is DTGR. His-179 functions as the Proton acceptor in the catalytic mechanism. Tyr-223 is modified (phosphotyrosine). Residue Thr-232 participates in substrate binding.

This sequence belongs to the LDH/MDH superfamily. LDH family. As to quaternary structure, homotetramer.

The protein resides in the cytoplasm. The enzyme catalyses (S)-lactate + NAD(+) = pyruvate + NADH + H(+). Its pathway is fermentation; pyruvate fermentation to lactate; (S)-lactate from pyruvate: step 1/1. Its activity is regulated as follows. Under neutral conditions, the reaction is stimulated 4-fold by fructose 1,6-bisphosphate (FBP), however the L-lactate dehydrogenase is a nonallosteric enzyme. Calcium and zinc ions at 1 mM stimulate the activity almost 2-fold. Weakly inhibited by cadmium, cobalt and copper ions. In terms of biological role, catalyzes the conversion of lactate to pyruvate. This is L-lactate dehydrogenase from Lactobacillus helveticus (Lactobacillus suntoryeus).